The chain runs to 112 residues: Large ribosomal subunit protein eL36y (112 aa).

Over residues 79-88 (KLGTHKRAKR) the composition is skewed to basic residues. The disordered stretch occupies residues 79-112 (KLGTHKRAKRKREEMSSVLRKMRSGGGGATEKKK). A compositionally biased stretch (gly residues) spans 102–112 (SGGGGATEKKK).

This sequence belongs to the eukaryotic ribosomal protein eL36 family.

This chain is Large ribosomal subunit protein eL36y (RPL36B), found in Arabidopsis thaliana (Mouse-ear cress).